An 88-amino-acid polypeptide reads, in one-letter code: Small ribosomal subunit protein uS15 (88 aa).

It belongs to the universal ribosomal protein uS15 family. In terms of assembly, part of the 30S ribosomal subunit. Forms a bridge to the 50S subunit in the 70S ribosome, contacting the 23S rRNA.

Its function is as follows. One of the primary rRNA binding proteins, it binds directly to 16S rRNA where it helps nucleate assembly of the platform of the 30S subunit by binding and bridging several RNA helices of the 16S rRNA. Forms an intersubunit bridge (bridge B4) with the 23S rRNA of the 50S subunit in the ribosome. In Borrelia garinii subsp. bavariensis (strain ATCC BAA-2496 / DSM 23469 / PBi) (Borreliella bavariensis), this protein is Small ribosomal subunit protein uS15.